We begin with the raw amino-acid sequence, 203 residues long: Holliday junction branch migration complex subunit RuvA (203 aa).

The interval M1–I64 is domain I. The tract at residues T65–E143 is domain II. The flexible linker stretch occupies residues R144 to A154. The domain III stretch occupies residues P155–L203.

This sequence belongs to the RuvA family. As to quaternary structure, homotetramer. Forms an RuvA(8)-RuvB(12)-Holliday junction (HJ) complex. HJ DNA is sandwiched between 2 RuvA tetramers; dsDNA enters through RuvA and exits via RuvB. An RuvB hexamer assembles on each DNA strand where it exits the tetramer. Each RuvB hexamer is contacted by two RuvA subunits (via domain III) on 2 adjacent RuvB subunits; this complex drives branch migration. In the full resolvosome a probable DNA-RuvA(4)-RuvB(12)-RuvC(2) complex forms which resolves the HJ.

The protein resides in the cytoplasm. In terms of biological role, the RuvA-RuvB-RuvC complex processes Holliday junction (HJ) DNA during genetic recombination and DNA repair, while the RuvA-RuvB complex plays an important role in the rescue of blocked DNA replication forks via replication fork reversal (RFR). RuvA specifically binds to HJ cruciform DNA, conferring on it an open structure. The RuvB hexamer acts as an ATP-dependent pump, pulling dsDNA into and through the RuvAB complex. HJ branch migration allows RuvC to scan DNA until it finds its consensus sequence, where it cleaves and resolves the cruciform DNA. This is Holliday junction branch migration complex subunit RuvA from Shewanella denitrificans (strain OS217 / ATCC BAA-1090 / DSM 15013).